The primary structure comprises 132 residues: EF-hand calcium-binding domain-containing protein 10 (132 aa).

2 consecutive EF-hand domains span residues 64–99 (MDNS…LGLC) and 120–132 (EMNK…WSMF).

In Mus musculus (Mouse), this protein is EF-hand calcium-binding domain-containing protein 10 (Efcab10).